A 456-amino-acid chain; its full sequence is Shootin-1 (456 aa).

Methionine 1 is modified (N-acetylmethionine). Phosphoserine occurs at positions 3 and 4. Residues 7–353 adopt a coiled-coil conformation; it reads EKQLQLITSL…RVNQSENSVP (347 aa). Residues serine 101 and serine 249 each carry the phosphoserine; by PAK1 modification. Disordered regions lie at residues 343-405 and 418-445; these read KRVN…VTDL and KKGV…CESA. Pro residues predominate over residues 352–369; that stretch reads VPPPPPPPPPLPPPPPNP. A Phosphoserine modification is found at serine 375.

This sequence belongs to the shootin family. Interacts with L1CAM; this interaction occurs in axonal growth cones. Interacts with actin filament retrograde flow; this interaction is enhanced in a netrin-1- and PAK1-dependent manner and promotes F-actin-substrate coupling and concomitant formation of traction forces at axonal growth cones. Interacts with RUFY3. Interacts with PFN2. Interacts (via N-terminus) with KIF20B; this interaction is direct and promotes the association of SHTN1 to microtubules in primary neurons. Associates with microtubule. Post-translationally, phosphorylated on Ser-101 and Ser-249 by PAK1 through a CDC42- and RAC1-dependent signaling pathway, which enhances its association with F-actin retrograde flow in filopodia and lamellipodia of axonal growth cones. Phosphorylation on Ser-101 and Ser-249 is increased by netrin-1.

The protein localises to the perikaryon. It is found in the cell projection. The protein resides in the axon. Its subcellular location is the growth cone. It localises to the cytoplasm. The protein localises to the cytoskeleton. It is found in the filopodium. The protein resides in the lamellipodium. Its function is as follows. Involved in the generation of internal asymmetric signals required for neuronal polarization and neurite outgrowth. Mediates netrin-1-induced F-actin-substrate coupling or 'clutch engagement' within the axon growth cone through activation of CDC42, RAC1 and PAK1-dependent signaling pathway, thereby converting the F-actin retrograde flow into traction forces, concomitantly with filopodium extension and axon outgrowth. Plays a role in cytoskeletal organization by regulating the subcellular localization of phosphoinositide 3-kinase (PI3K) activity at the axonal growth cone. Also plays a role in regenerative neurite outgrowth. In the developing cortex, cooperates with KIF20B to promote both the transition from the multipolar to the bipolar stage and the radial migration of cortical neurons from the ventricular zone toward the superficial layer of the neocortex. Involved in the accumulation of phosphatidylinositol 3,4,5-trisphosphate (PIP3) in the growth cone of primary hippocampal neurons. This Pongo abelii (Sumatran orangutan) protein is Shootin-1.